Consider the following 361-residue polypeptide: Peptide chain release factor 1 (361 aa).

At Q237 the chain carries N5-methylglutamine. The segment covering 283–296 has biased composition (basic and acidic residues); the sequence is VEDEKRRSEEESTR. The segment at 283–305 is disordered; it reads VEDEKRRSEEESTRRNLVSSGDR.

Belongs to the prokaryotic/mitochondrial release factor family. In terms of processing, methylated by PrmC. Methylation increases the termination efficiency of RF1.

Its subcellular location is the cytoplasm. Its function is as follows. Peptide chain release factor 1 directs the termination of translation in response to the peptide chain termination codons UAG and UAA. This is Peptide chain release factor 1 from Shewanella woodyi (strain ATCC 51908 / MS32).